Reading from the N-terminus, the 255-residue chain is Ribonuclease HII (255 aa).

The 184-residue stretch at 72-255 (RLIAGVDEAG…KTFAPVQSYC (184 aa)) folds into the RNase H type-2 domain. Residues aspartate 78, glutamate 79, and aspartate 170 each contribute to the a divalent metal cation site.

It belongs to the RNase HII family. The cofactor is Mn(2+). It depends on Mg(2+) as a cofactor.

The protein resides in the cytoplasm. It carries out the reaction Endonucleolytic cleavage to 5'-phosphomonoester.. Functionally, endonuclease that specifically degrades the RNA of RNA-DNA hybrids. This is Ribonuclease HII from Bacillus velezensis (strain DSM 23117 / BGSC 10A6 / LMG 26770 / FZB42) (Bacillus amyloliquefaciens subsp. plantarum).